The sequence spans 392 residues: Branched-chain-amino-acid aminotransferase, mitochondrial (392 aa).

The N-terminal 27 residues, Met-1 to Tyr-27, are a transit peptide targeting the mitochondrion. Tyr-168 lines the substrate pocket. N6-(pyridoxal phosphate)lysine is present on Lys-229. Lys-321 carries the post-translational modification N6-acetyllysine.

It belongs to the class-IV pyridoxal-phosphate-dependent aminotransferase family. As to quaternary structure, homodimer. Pyridoxal 5'-phosphate is required as a cofactor. In terms of tissue distribution, ubiquitous.

The protein localises to the mitochondrion. The enzyme catalyses L-leucine + 2-oxoglutarate = 4-methyl-2-oxopentanoate + L-glutamate. The catalysed reaction is L-isoleucine + 2-oxoglutarate = (S)-3-methyl-2-oxopentanoate + L-glutamate. It carries out the reaction L-valine + 2-oxoglutarate = 3-methyl-2-oxobutanoate + L-glutamate. Its function is as follows. Catalyzes the first reaction in the catabolism of the essential branched chain amino acids leucine, isoleucine, and valine. May also function as a transporter of branched chain alpha-keto acids. In Homo sapiens (Human), this protein is Branched-chain-amino-acid aminotransferase, mitochondrial (BCAT2).